The sequence spans 228 residues: Sensory transduction protein RegX3 (228 aa).

The Response regulatory domain occupies 3–116 (SVLIVEDEES…ELIARIRAVL (114 aa)). Position 52 is a 4-aspartylphosphate (Asp-52). Residues 129–228 (DGVLEAGPVR…VRGLGYKLEG (100 aa)) constitute a DNA-binding region (ompR/PhoB-type).

In terms of processing, phosphorylated by SenX3.

Member of the two-component regulatory system SenX3/RegX3 involved in stress response. The system is involved in phosphate starvation response. Once phosphorylated by SenX3, activates the expression of the alkaline phosphatase phoA, the high-affinity phosphate transporter pstSCAB, phnDCE, phnF and senX3. May act as a negative regulator of NhaA. Acts by binding to a DNA motif consisting of an inverted repeat. In Mycolicibacterium smegmatis (strain ATCC 700084 / mc(2)155) (Mycobacterium smegmatis), this protein is Sensory transduction protein RegX3.